Reading from the N-terminus, the 478-residue chain is ATP synthase subunit beta (478 aa).

Position 164-171 (164-171 (GGAGVGKT)) interacts with ATP.

This sequence belongs to the ATPase alpha/beta chains family. F-type ATPases have 2 components, CF(1) - the catalytic core - and CF(0) - the membrane proton channel. CF(1) has five subunits: alpha(3), beta(3), gamma(1), delta(1), epsilon(1). CF(0) has three main subunits: a(1), b(2) and c(9-12). The alpha and beta chains form an alternating ring which encloses part of the gamma chain. CF(1) is attached to CF(0) by a central stalk formed by the gamma and epsilon chains, while a peripheral stalk is formed by the delta and b chains.

It localises to the cell membrane. It carries out the reaction ATP + H2O + 4 H(+)(in) = ADP + phosphate + 5 H(+)(out). Produces ATP from ADP in the presence of a proton gradient across the membrane. The catalytic sites are hosted primarily by the beta subunits. In Streptomyces avermitilis (strain ATCC 31267 / DSM 46492 / JCM 5070 / NBRC 14893 / NCIMB 12804 / NRRL 8165 / MA-4680), this protein is ATP synthase subunit beta.